A 217-amino-acid polypeptide reads, in one-letter code: MRQFIISENTMQKTSFRNHQVKRFSSQRSTRRKPENQPTRVILFNKPYDVLPQFTDEAGRKTLKEFIPVQGVYAAGRLDRDSEGLLVLTNNGALQARLTQPGKRTGKIYYVQVEGIPTQDALEALRNGVTLNDGPTLPAGAELVEEPAWLWPRNPPIRERKSIPTSWLKITLYEGRNRQVRRMTAHVGFPTLRLIRYAMGDYSLDNLANGEWRDATD.

Catalysis depends on Asp-79, which acts as the Nucleophile.

This sequence belongs to the pseudouridine synthase RsuA family.

The enzyme catalyses uridine(2457) in 23S rRNA = pseudouridine(2457) in 23S rRNA. Its function is as follows. Responsible for synthesis of pseudouridine from uracil-2457 in 23S ribosomal RNA. This chain is Ribosomal large subunit pseudouridine synthase E (rluE), found in Escherichia coli O6:H1 (strain CFT073 / ATCC 700928 / UPEC).